Reading from the N-terminus, the 702-residue chain is Ribosomal RNA large subunit methyltransferase K/L (702 aa).

A THUMP domain is found at 43 to 154; the sequence is LVYQSLMWSR…KETASIALDL (112 aa).

This sequence belongs to the methyltransferase superfamily. RlmKL family.

The protein resides in the cytoplasm. It catalyses the reaction guanosine(2445) in 23S rRNA + S-adenosyl-L-methionine = N(2)-methylguanosine(2445) in 23S rRNA + S-adenosyl-L-homocysteine + H(+). The enzyme catalyses guanosine(2069) in 23S rRNA + S-adenosyl-L-methionine = N(2)-methylguanosine(2069) in 23S rRNA + S-adenosyl-L-homocysteine + H(+). In terms of biological role, specifically methylates the guanine in position 2445 (m2G2445) and the guanine in position 2069 (m7G2069) of 23S rRNA. This is Ribosomal RNA large subunit methyltransferase K/L from Shigella sonnei (strain Ss046).